A 99-amino-acid polypeptide reads, in one-letter code: DNA-directed RNA polymerase subunit omega (99 aa).

Belongs to the RNA polymerase subunit omega family. The RNAP catalytic core consists of 2 alpha, 1 beta, 1 beta' and 1 omega subunit. When a sigma factor is associated with the core the holoenzyme is formed, which can initiate transcription.

It catalyses the reaction RNA(n) + a ribonucleoside 5'-triphosphate = RNA(n+1) + diphosphate. Its function is as follows. Promotes RNA polymerase assembly. Latches the N- and C-terminal regions of the beta' subunit thereby facilitating its interaction with the beta and alpha subunits. This chain is DNA-directed RNA polymerase subunit omega, found in Xanthomonas oryzae pv. oryzae (strain MAFF 311018).